The primary structure comprises 477 residues: Bifunctional protein HldE (477 aa).

A ribokinase region spans residues 1-319 (MTVIFPNFSK…NIMNSHICTT (319 aa)). An ATP-binding site is contributed by 195–198 (NISE). Asp264 is an active-site residue. Residues 346-477 (MTNGVFDILH…NIINAIKRKN (132 aa)) form a cytidylyltransferase region.

The protein in the N-terminal section; belongs to the carbohydrate kinase PfkB family. In the C-terminal section; belongs to the cytidylyltransferase family. In terms of assembly, homodimer.

It catalyses the reaction D-glycero-beta-D-manno-heptose 7-phosphate + ATP = D-glycero-beta-D-manno-heptose 1,7-bisphosphate + ADP + H(+). The enzyme catalyses D-glycero-beta-D-manno-heptose 1-phosphate + ATP + H(+) = ADP-D-glycero-beta-D-manno-heptose + diphosphate. The protein operates within nucleotide-sugar biosynthesis; ADP-L-glycero-beta-D-manno-heptose biosynthesis; ADP-L-glycero-beta-D-manno-heptose from D-glycero-beta-D-manno-heptose 7-phosphate: step 1/4. It functions in the pathway nucleotide-sugar biosynthesis; ADP-L-glycero-beta-D-manno-heptose biosynthesis; ADP-L-glycero-beta-D-manno-heptose from D-glycero-beta-D-manno-heptose 7-phosphate: step 3/4. Its function is as follows. Catalyzes the phosphorylation of D-glycero-D-manno-heptose 7-phosphate at the C-1 position to selectively form D-glycero-beta-D-manno-heptose-1,7-bisphosphate. Catalyzes the ADP transfer from ATP to D-glycero-beta-D-manno-heptose 1-phosphate, yielding ADP-D-glycero-beta-D-manno-heptose. The chain is Bifunctional protein HldE from Blochmanniella pennsylvanica (strain BPEN).